An 848-amino-acid chain; its full sequence is Coiled-coil domain-containing protein 110 (848 aa).

Residues 41–62 (SEGVKESGGNEPEYGCASEPEN) are disordered. Residues 442-794 (LQNYLKESLQ…LSDKVSSQNN (353 aa)) adopt a coiled-coil conformation. Phosphoserine is present on S620.

The protein localises to the nucleus. The sequence is that of Coiled-coil domain-containing protein 110 (Ccdc110) from Mus musculus (Mouse).